The primary structure comprises 261 residues: MKNFKEVIIIFDSGIGGLSYFKYIKSRIGGCQYVYVADNKNFPYGEKSPEYLLEAVLFLIEKLKKIYNIGALVLACNTISVSVYNKLNFVFPVVYTLPDVSSVSDLVLKRVLLIATNTTLESKFVKDQVNIHNDLIVKAAGELVNFVEYGENYKKYALRCLEALKFEVVNTGREIVFLGCTHYLHLKVMIEDFLKIPVYENRELVVKNLIRSMNFSEHKGNYYKNDFDFVDDEFYLTENKNLTFYQNFCKKYNLRFKGMIV.

Residues 12–13 (DS) and 44–45 (YG) each bind substrate. Residue cysteine 76 is the Proton donor/acceptor of the active site. Substrate is bound at residue 77–78 (NT). The Proton donor/acceptor role is filled by cysteine 180. A substrate-binding site is contributed by 181–182 (TH).

Belongs to the aspartate/glutamate racemases family.

The catalysed reaction is L-glutamate = D-glutamate. Its pathway is cell wall biogenesis; peptidoglycan biosynthesis. Functionally, provides the (R)-glutamate required for cell wall biosynthesis. This chain is Glutamate racemase, found in Borreliella burgdorferi (strain ATCC 35210 / DSM 4680 / CIP 102532 / B31) (Borrelia burgdorferi).